A 541-amino-acid polypeptide reads, in one-letter code: Putative asparagine synthetase [glutamine-hydrolyzing] 1 (541 aa).

The active-site For GATase activity is the Cys2. The region spanning 2–213 is the Glutamine amidotransferase type-2 domain; the sequence is CSISGIIVKD…PNSQLIYYLD (212 aa). L-glutamine is bound by residues 68–72, 92–94, and Asp116; these read RLAIV and NGE. Residues Val289 and 363-364 each bind ATP; that span reads SG.

Belongs to the asparagine synthetase family.

The enzyme catalyses L-aspartate + L-glutamine + ATP + H2O = L-asparagine + L-glutamate + AMP + diphosphate + H(+). It functions in the pathway amino-acid biosynthesis; L-asparagine biosynthesis; L-asparagine from L-aspartate (L-Gln route): step 1/1. This is Putative asparagine synthetase [glutamine-hydrolyzing] 1 from Methanocaldococcus jannaschii (strain ATCC 43067 / DSM 2661 / JAL-1 / JCM 10045 / NBRC 100440) (Methanococcus jannaschii).